The chain runs to 145 residues: 3-dehydroquinate dehydratase (145 aa).

The Proton acceptor role is filled by Tyr-22. Substrate contacts are provided by Asn-71, His-77, and Asp-84. The active-site Proton donor is the His-97. Substrate is bound by residues 98 to 99 (LS) and Arg-108.

Belongs to the type-II 3-dehydroquinase family. Homododecamer.

It catalyses the reaction 3-dehydroquinate = 3-dehydroshikimate + H2O. It functions in the pathway metabolic intermediate biosynthesis; chorismate biosynthesis; chorismate from D-erythrose 4-phosphate and phosphoenolpyruvate: step 3/7. Catalyzes a trans-dehydration via an enolate intermediate. The polypeptide is 3-dehydroquinate dehydratase (Francisella tularensis subsp. tularensis (strain WY96-3418)).